A 185-amino-acid chain; its full sequence is Thymidine kinase (185 aa).

Residues 10 to 17 and 83 to 86 contribute to the ATP site; these read GPMYSGKT and DEVQ. The Proton acceptor role is filled by Glu-84. The Zn(2+) site is built by Cys-140, Cys-143, Cys-173, and Cys-176.

It belongs to the thymidine kinase family. Homotetramer.

The protein resides in the cytoplasm. It carries out the reaction thymidine + ATP = dTMP + ADP + H(+). In Pseudothermotoga lettingae (strain ATCC BAA-301 / DSM 14385 / NBRC 107922 / TMO) (Thermotoga lettingae), this protein is Thymidine kinase.